The primary structure comprises 312 residues: ADP-L-glycero-D-manno-heptose-6-epimerase (312 aa).

NADP(+) contacts are provided by residues 10 to 11 (FI), 31 to 32 (DN), K38, K53, 75 to 79 (EGACS), and N92. Y140 functions as the Proton acceptor in the catalytic mechanism. Residue K144 participates in NADP(+) binding. Position 169 (N169) interacts with substrate. NADP(+) is bound by residues V170 and K178. The active-site Proton acceptor is the K178. Substrate is bound by residues S180, H187, 201-204 (FEGS), R209, and Y274.

Belongs to the NAD(P)-dependent epimerase/dehydratase family. HldD subfamily. Homopentamer. NADP(+) is required as a cofactor.

The catalysed reaction is ADP-D-glycero-beta-D-manno-heptose = ADP-L-glycero-beta-D-manno-heptose. It functions in the pathway nucleotide-sugar biosynthesis; ADP-L-glycero-beta-D-manno-heptose biosynthesis; ADP-L-glycero-beta-D-manno-heptose from D-glycero-beta-D-manno-heptose 7-phosphate: step 4/4. Its function is as follows. Catalyzes the interconversion between ADP-D-glycero-beta-D-manno-heptose and ADP-L-glycero-beta-D-manno-heptose via an epimerization at carbon 6 of the heptose. The protein is ADP-L-glycero-D-manno-heptose-6-epimerase of Proteus mirabilis (strain HI4320).